The chain runs to 399 residues: Elongation factor Tu (399 aa).

The tr-type G domain occupies 10–209; that stretch reads KPHVNIGTIG…AVDSYIPTPV (200 aa). The G1 stretch occupies residues 19–26; sequence GHVDHGKT. 19-26 is a binding site for GTP; that stretch reads GHVDHGKT. Thr-26 contacts Mg(2+). A G2 region spans residues 60 to 64; that stretch reads GITIA. The G3 stretch occupies residues 81-84; that stretch reads DCPG. Residues 81–85 and 136–139 each bind GTP; these read DCPGH and NKAD. Residues 136-139 are G4; the sequence is NKAD. A G5 region spans residues 174 to 176; the sequence is SAL.

The protein belongs to the TRAFAC class translation factor GTPase superfamily. Classic translation factor GTPase family. EF-Tu/EF-1A subfamily. Monomer.

It localises to the cytoplasm. It catalyses the reaction GTP + H2O = GDP + phosphate + H(+). GTP hydrolase that promotes the GTP-dependent binding of aminoacyl-tRNA to the A-site of ribosomes during protein biosynthesis. The chain is Elongation factor Tu from Campylobacter fetus subsp. fetus (strain 82-40).